We begin with the raw amino-acid sequence, 276 residues long: ATP synthase subunit a (276 aa).

6 helical membrane passes run 47 to 67, 107 to 127, 152 to 172, 188 to 208, 226 to 246, and 247 to 267; these read WHIDSLLFSVGLGVLFLWLFY, IAPLGLTIFVWVFLMNLMDLI, DLNVTLGLALSVFVLIVFYSI, PFNHWALIPINFVLETVTLIA, LIFILIALMPWWAQFALSVPW, and AIFHILVIVLQAFIFMMLTIV.

This sequence belongs to the ATPase A chain family. As to quaternary structure, F-type ATPases have 2 components, CF(1) - the catalytic core - and CF(0) - the membrane proton channel. CF(1) has five subunits: alpha(3), beta(3), gamma(1), delta(1), epsilon(1). CF(0) has three main subunits: a(1), b(2) and c(9-12). The alpha and beta chains form an alternating ring which encloses part of the gamma chain. CF(1) is attached to CF(0) by a central stalk formed by the gamma and epsilon chains, while a peripheral stalk is formed by the delta and b chains.

It is found in the cell inner membrane. In terms of biological role, key component of the proton channel; it plays a direct role in the translocation of protons across the membrane. This chain is ATP synthase subunit a, found in Shewanella halifaxensis (strain HAW-EB4).